The chain runs to 334 residues: MNIYYDKNADLNIIKDMKVAIVGYGSQGHAHANNLRDSNVEVVVALRDGSASSKKASDAGLNVKSIKQATAWADLIMVLAPDEFQAQIYTDSIEPNLKQGATLAFAHGFNIHYNRIIPRADLDVIMIAPKAPGHTVRSEFVKGGGIPDLIAVFQDVSGNAKDTALSYASAIGGGRTGILETSFKDETETDLFGEQVVLCGGTTALVQAGFETLVEAGYEPEMAYFECLHELKLIVDLMYEGGIANMRYSISNTAEYGDITRGSRIVTADTKDEMKKILIEIQNGVFAKEFVANVGELPAHREVQRAHQIEQVGESLRSMMPWINKNKIVDQSKN.

The KARI N-terminal Rossmann domain occupies 1 to 181; that stretch reads MNIYYDKNAD…GGGRTGILET (181 aa). NADP(+) is bound by residues 24–27, Arg47, Ser50, Ser52, and 82–85; these read YGSQ and DEFQ. His107 is an active-site residue. Gly133 serves as a coordination point for NADP(+). One can recognise a KARI C-terminal knotted domain in the interval 182–323; that stretch reads SFKDETETDL…ESLRSMMPWI (142 aa). Mg(2+) is bound by residues Asp190, Glu194, Glu226, and Glu230. A substrate-binding site is contributed by Ser251.

This sequence belongs to the ketol-acid reductoisomerase family. The cofactor is Mg(2+).

It carries out the reaction (2R)-2,3-dihydroxy-3-methylbutanoate + NADP(+) = (2S)-2-acetolactate + NADPH + H(+). The catalysed reaction is (2R,3R)-2,3-dihydroxy-3-methylpentanoate + NADP(+) = (S)-2-ethyl-2-hydroxy-3-oxobutanoate + NADPH + H(+). Its pathway is amino-acid biosynthesis; L-isoleucine biosynthesis; L-isoleucine from 2-oxobutanoate: step 2/4. It participates in amino-acid biosynthesis; L-valine biosynthesis; L-valine from pyruvate: step 2/4. Functionally, involved in the biosynthesis of branched-chain amino acids (BCAA). Catalyzes an alkyl-migration followed by a ketol-acid reduction of (S)-2-acetolactate (S2AL) to yield (R)-2,3-dihydroxy-isovalerate. In the isomerase reaction, S2AL is rearranged via a Mg-dependent methyl migration to produce 3-hydroxy-3-methyl-2-ketobutyrate (HMKB). In the reductase reaction, this 2-ketoacid undergoes a metal-dependent reduction by NADPH to yield (R)-2,3-dihydroxy-isovalerate. The chain is Ketol-acid reductoisomerase (NADP(+)) from Vesicomyosocius okutanii subsp. Calyptogena okutanii (strain HA).